Reading from the N-terminus, the 406-residue chain is Cysteine desulfurase (406 aa).

Lys226 carries the post-translational modification N6-(pyridoxal phosphate)lysine. Cys364 functions as the Cysteine persulfide intermediate in the catalytic mechanism.

This sequence belongs to the class-V pyridoxal-phosphate-dependent aminotransferase family. Csd subfamily. In terms of assembly, homodimer. Interacts with SufE and the SufBCD complex composed of SufB, SufC and SufD. The interaction with SufE is required to mediate the direct transfer of the sulfur atom from the S-sulfanylcysteine. It depends on pyridoxal 5'-phosphate as a cofactor.

Its subcellular location is the cytoplasm. The catalysed reaction is (sulfur carrier)-H + L-cysteine = (sulfur carrier)-SH + L-alanine. It catalyses the reaction L-selenocysteine + AH2 = hydrogenselenide + L-alanine + A + H(+). The protein operates within cofactor biosynthesis; iron-sulfur cluster biosynthesis. Its function is as follows. Cysteine desulfurases mobilize the sulfur from L-cysteine to yield L-alanine, an essential step in sulfur metabolism for biosynthesis of a variety of sulfur-containing biomolecules. Component of the suf operon, which is activated and required under specific conditions such as oxidative stress and iron limitation. Acts as a potent selenocysteine lyase in vitro, that mobilizes selenium from L-selenocysteine. Selenocysteine lyase activity is however unsure in vivo. This is Cysteine desulfurase from Escherichia coli O6:K15:H31 (strain 536 / UPEC).